The sequence spans 212 residues: LexA repressor (212 aa).

The H-T-H motif DNA-binding region spans 26-46 (VREIGEAVGLSSTSTVHGHID). Residues serine 128 and lysine 171 each act as for autocatalytic cleavage activity in the active site.

This sequence belongs to the peptidase S24 family. In terms of assembly, homodimer.

The enzyme catalyses Hydrolysis of Ala-|-Gly bond in repressor LexA.. Represses a number of genes involved in the response to DNA damage (SOS response), including recA and lexA. In the presence of single-stranded DNA, RecA interacts with LexA causing an autocatalytic cleavage which disrupts the DNA-binding part of LexA, leading to derepression of the SOS regulon and eventually DNA repair. This Oenococcus oeni (strain ATCC BAA-331 / PSU-1) protein is LexA repressor.